The sequence spans 444 residues: MPGIKVFGETVLRGSVRVSGAKNATTKLLVASLLSDQRTILKNVPNIEDVRQTVDLCRVLGAIVEWDQQAQVIEIHTPRILLSKVPPQFSCVNRIPILLLGALLRRCPYGIFVPILGGDAIGPRTLHFHLEGLKKLGAEIVISDEGYWASAPNGLVGAHITLPYPSVGATENLILASVGAQGRTIIKNAALEVEIIDLIVFLQKAGVEITTDNDKTIEIFGCQDFYSVEHSIIPDKIEAASFGMAAVVSQGRIFVEQARHEHMIPFLKVLRSIGGGFSVHENGIEFFYDKPLKGGVLLETDVHPGFITDWQQPFAVLLSQSEGCSVIHETVHENRLGYLKGLVKMGAHCDLFHECLSAKSCRYSTGNHPHSAVIHGPTPLQATDLVIPDLRAGFAYVMAALIAEGGASWIENTEMLDRGYTDWRGKLERLGAKVLARDSVSVYV.

Residue 22–23 coordinates phosphoenolpyruvate; it reads KN. Residue R94 coordinates UDP-N-acetyl-alpha-D-glucosamine. D119 acts as the Proton donor in catalysis. UDP-N-acetyl-alpha-D-glucosamine-binding residues include D309 and V331.

This sequence belongs to the EPSP synthase family. MurA subfamily.

Its subcellular location is the cytoplasm. It carries out the reaction phosphoenolpyruvate + UDP-N-acetyl-alpha-D-glucosamine = UDP-N-acetyl-3-O-(1-carboxyvinyl)-alpha-D-glucosamine + phosphate. It participates in cell wall biogenesis; peptidoglycan biosynthesis. Cell wall formation. Adds enolpyruvyl to UDP-N-acetylglucosamine. In Chlamydia trachomatis serovar D (strain ATCC VR-885 / DSM 19411 / UW-3/Cx), this protein is UDP-N-acetylglucosamine 1-carboxyvinyltransferase.